Consider the following 106-residue polypeptide: UPF0145 protein Csac_0771 (106 aa).

It belongs to the UPF0145 family.

The protein is UPF0145 protein Csac_0771 of Caldicellulosiruptor saccharolyticus (strain ATCC 43494 / DSM 8903 / Tp8T 6331).